The sequence spans 316 residues: Zinc finger protein 330 (316 aa).

The tract at residues 1-24 is disordered; the sequence is MPKKKTGARKKAENRREREKQLRA. The Nuclear localization signal motif lies at 3-11; it reads KKKTGARKK. Basic and acidic residues predominate over residues 10–22; the sequence is KKAENRREREKQL. 4 C4-type zinc fingers span residues 42–58, 67–104, 129–149, and 175–189; these read CDKC…CYFC, CAQC…CDFC, CVEC…CSFC, and CVSC…CLRC. The interval 227–299 is disordered; it reads SMSTRSLKFG…ESSDLFNNLN (73 aa). Positions 268 to 291 are enriched in acidic residues; sequence DDDEEEDEAEDEEEEDGKDSDAES. Residue S287 is modified to Phosphoserine.

This sequence belongs to the NOA36 family.

It localises to the nucleus. The protein localises to the nucleolus. It is found in the chromosome. Its subcellular location is the centromere. This is Zinc finger protein 330 (Znf330) from Mus musculus (Mouse).